A 799-amino-acid polypeptide reads, in one-letter code: Probable inorganic carbon transporter subunit DabA (799 aa).

Zn(2+) is bound by residues Cys303, Asp305, His479, and Cys494. A disordered region spans residues 574 to 598 (AGAAAERSEALNGADPDKGVSETAS).

This sequence belongs to the inorganic carbon transporter (TC 9.A.2) DabA family. As to quaternary structure, forms a complex with DabB. Zn(2+) is required as a cofactor.

It is found in the cell membrane. Part of an energy-coupled inorganic carbon pump. The protein is Probable inorganic carbon transporter subunit DabA of Natronomonas pharaonis (strain ATCC 35678 / DSM 2160 / CIP 103997 / JCM 8858 / NBRC 14720 / NCIMB 2260 / Gabara) (Halobacterium pharaonis).